A 222-amino-acid chain; its full sequence is Germin-like protein subfamily 1 member 4 (222 aa).

An N-terminal signal peptide occupies residues 1 to 24; the sequence is MEGLLQFLLAKIILLALASSFVYC. Cysteines 34 and 50 form a disulfide. The N-linked (GlcNAc...) asparagine glycan is linked to Asn-38. Residues 64–215 enclose the Cupin type-1 domain; sequence SGLNVPGNTI…AFALDYNKVK (152 aa). The Mn(2+) site is built by His-112 and His-114. An N-linked (GlcNAc...) asparagine glycan is attached at Asn-139. Mn(2+) is bound at residue His-161.

Belongs to the germin family. In terms of assembly, oligomer (believed to be a pentamer but probably hexamer).

Its subcellular location is the secreted. The protein localises to the extracellular space. It is found in the apoplast. Functionally, may play a role in plant defense. Probably has no oxalate oxidase activity even if the active site is conserved. In Arabidopsis thaliana (Mouse-ear cress), this protein is Germin-like protein subfamily 1 member 4.